A 700-amino-acid chain; its full sequence is Elongation factor G (700 aa).

One can recognise a tr-type G domain in the interval Asp8 to Leu290. Residues Ala17–Thr24, Asp88–His92, and Asn142–Asp145 contribute to the GTP site.

It belongs to the TRAFAC class translation factor GTPase superfamily. Classic translation factor GTPase family. EF-G/EF-2 subfamily.

Its subcellular location is the cytoplasm. Catalyzes the GTP-dependent ribosomal translocation step during translation elongation. During this step, the ribosome changes from the pre-translocational (PRE) to the post-translocational (POST) state as the newly formed A-site-bound peptidyl-tRNA and P-site-bound deacylated tRNA move to the P and E sites, respectively. Catalyzes the coordinated movement of the two tRNA molecules, the mRNA and conformational changes in the ribosome. The sequence is that of Elongation factor G from Vesicomyosocius okutanii subsp. Calyptogena okutanii (strain HA).